The sequence spans 139 residues: Putative pre-16S rRNA nuclease (139 aa).

Belongs to the YqgF nuclease family.

The protein localises to the cytoplasm. In terms of biological role, could be a nuclease involved in processing of the 5'-end of pre-16S rRNA. The chain is Putative pre-16S rRNA nuclease from Streptococcus gordonii (strain Challis / ATCC 35105 / BCRC 15272 / CH1 / DL1 / V288).